The following is a 923-amino-acid chain: Isoleucine--tRNA ligase (923 aa).

The 'HIGH' region motif lies at 57–67 (PYANGDIHIGT). E561 lines the L-isoleucyl-5'-AMP pocket. The 'KMSKS' region signature appears at 602 to 606 (AMHKS). Residue K605 participates in ATP binding. Residues C895, C898, C915, and C918 each contribute to the Zn(2+) site.

This sequence belongs to the class-I aminoacyl-tRNA synthetase family. IleS type 1 subfamily. Monomer. Zn(2+) is required as a cofactor.

The protein localises to the cytoplasm. The enzyme catalyses tRNA(Ile) + L-isoleucine + ATP = L-isoleucyl-tRNA(Ile) + AMP + diphosphate. Its function is as follows. Catalyzes the attachment of isoleucine to tRNA(Ile). As IleRS can inadvertently accommodate and process structurally similar amino acids such as valine, to avoid such errors it has two additional distinct tRNA(Ile)-dependent editing activities. One activity is designated as 'pretransfer' editing and involves the hydrolysis of activated Val-AMP. The other activity is designated 'posttransfer' editing and involves deacylation of mischarged Val-tRNA(Ile). This chain is Isoleucine--tRNA ligase, found in Brachyspira hyodysenteriae (strain ATCC 49526 / WA1).